Reading from the N-terminus, the 586-residue chain is A-type ATP synthase subunit A (586 aa).

Residue 233–240 (GPFGSGKT) participates in ATP binding.

Belongs to the ATPase alpha/beta chains family. As to quaternary structure, has multiple subunits with at least A(3), B(3), C, D, E, F, H, I and proteolipid K(x).

Its subcellular location is the cell membrane. The catalysed reaction is ATP + H2O + 4 H(+)(in) = ADP + phosphate + 5 H(+)(out). In terms of biological role, component of the A-type ATP synthase that produces ATP from ADP in the presence of a proton gradient across the membrane. The A chain is the catalytic subunit. In Methanococcus aeolicus (strain ATCC BAA-1280 / DSM 17508 / OCM 812 / Nankai-3), this protein is A-type ATP synthase subunit A.